Reading from the N-terminus, the 739-residue chain is Polyribonucleotide nucleotidyltransferase (739 aa).

The Mg(2+) site is built by Asp-487 and Asp-493. The 60-residue stretch at 554–613 (PRIETMQIPTDKIRDVIGTGGKVIREIVEKTGAKINIEDTGVVKIASADGKAIKAAYNWI) folds into the KH domain. The S1 motif domain maps to 623–691 (GVIYDGTIVK…DRGKIRLSMK (69 aa)). The disordered stretch occupies residues 694 to 739 (DQQTGEDITDKIKAQRDAERAERGDEPREPREGGRHRGERRREAGE). Residues 701 to 739 (ITDKIKAQRDAERAERGDEPREPREGGRHRGERRREAGE) are compositionally biased toward basic and acidic residues.

This sequence belongs to the polyribonucleotide nucleotidyltransferase family. Mg(2+) is required as a cofactor.

Its subcellular location is the cytoplasm. It carries out the reaction RNA(n+1) + phosphate = RNA(n) + a ribonucleoside 5'-diphosphate. Functionally, involved in mRNA degradation. Catalyzes the phosphorolysis of single-stranded polyribonucleotides processively in the 3'- to 5'-direction. The protein is Polyribonucleotide nucleotidyltransferase of Methylobacterium radiotolerans (strain ATCC 27329 / DSM 1819 / JCM 2831 / NBRC 15690 / NCIMB 10815 / 0-1).